The chain runs to 211 residues: dITP/XTP pyrophosphatase (211 aa).

Threonine 7–lysine 12 provides a ligand contact to substrate. Glutamate 43 and aspartate 72 together coordinate Mg(2+). Aspartate 72 (proton acceptor) is an active-site residue. Substrate is bound by residues serine 73, phenylalanine 169–aspartate 172, lysine 190, and histidine 195–arginine 196.

It belongs to the HAM1 NTPase family. As to quaternary structure, homodimer. It depends on Mg(2+) as a cofactor.

It carries out the reaction XTP + H2O = XMP + diphosphate + H(+). It catalyses the reaction dITP + H2O = dIMP + diphosphate + H(+). The catalysed reaction is ITP + H2O = IMP + diphosphate + H(+). Its function is as follows. Pyrophosphatase that catalyzes the hydrolysis of nucleoside triphosphates to their monophosphate derivatives, with a high preference for the non-canonical purine nucleotides XTP (xanthosine triphosphate), dITP (deoxyinosine triphosphate) and ITP. Seems to function as a house-cleaning enzyme that removes non-canonical purine nucleotides from the nucleotide pool, thus preventing their incorporation into DNA/RNA and avoiding chromosomal lesions. The protein is dITP/XTP pyrophosphatase of Hydrogenobaculum sp. (strain Y04AAS1).